The following is a 291-amino-acid chain: D-alanyl-D-alanine carboxypeptidase (291 aa).

A signal peptide spans 1–29 (MRLRRAAATVITTGALLAAGTLGATPATA). The active-site Acyl-ester intermediate is Ser-64. Lys-67 functions as the Proton acceptor in the catalytic mechanism. Ser-125 is an active-site residue. A substrate-binding site is contributed by Lys-242.

This sequence belongs to the peptidase S11 family.

The protein resides in the secreted. The enzyme catalyses Preferential cleavage: (Ac)2-L-Lys-D-Ala-|-D-Ala. Also transpeptidation of peptidyl-alanyl moieties that are N-acyl substituents of D-alanine.. Its pathway is cell wall biogenesis; peptidoglycan biosynthesis. Its function is as follows. Removes C-terminal D-alanyl residues from sugar-peptide cell wall precursors. The chain is D-alanyl-D-alanine carboxypeptidase from Streptomyces sp. (strain K15).